The following is a 26-amino-acid chain: Alpha-amylase inhibitor 1 (26 aa).

The protein belongs to the protease inhibitor I6 (cereal trypsin/alpha-amylase inhibitor) family.

The protein resides in the secreted. Its function is as follows. Alpha-amylase inhibitor. This Saussurea costus (Costus) protein is Alpha-amylase inhibitor 1.